The sequence spans 459 residues: Glutamyl-tRNA reductase (459 aa).

Substrate contacts are provided by residues 47–50, Ser140, 145–147, and Gln151; these read TCNR and EPQ. Residue Cys48 is the Nucleophile of the active site. 220–225 lines the NADP(+) pocket; it reads AAGEMN.

Belongs to the glutamyl-tRNA reductase family. In terms of assembly, homodimer.

The catalysed reaction is (S)-4-amino-5-oxopentanoate + tRNA(Glu) + NADP(+) = L-glutamyl-tRNA(Glu) + NADPH + H(+). It participates in porphyrin-containing compound metabolism; protoporphyrin-IX biosynthesis; 5-aminolevulinate from L-glutamyl-tRNA(Glu): step 1/2. Catalyzes the NADPH-dependent reduction of glutamyl-tRNA(Glu) to glutamate 1-semialdehyde (GSA). The polypeptide is Glutamyl-tRNA reductase (Psychrobacter arcticus (strain DSM 17307 / VKM B-2377 / 273-4)).